Here is a 1233-residue protein sequence, read N- to C-terminus: Hemocyanin A-type, units Ode to Odg (1233 aa).

The interval 1–4 (EGNE) is ODD. Positions 5 to 422 (YLVRKNVERL…KQDADIDIPL (418 aa)) are ODE. Histidine 45 is a binding site for Cu cation. Residues cysteine 51 and cysteine 62 are joined by a disulfide bond. Residues 63 to 65 (CLH) constitute a cross-link (2'-(S-cysteinyl)-histidine (Cys-His)). Residues histidine 65, histidine 74, histidine 186, histidine 190, and histidine 217 each contribute to the Cu cation site. Disulfide bonds link cysteine 176–cysteine 243 and cysteine 334–cysteine 340. The N-linked (GlcNAc...) asparagine glycan is linked to asparagine 392. An ODF region spans residues 423–839 (NHIRRNVESL…KEIEKEAVRG (417 aa)). Histidine 463 is a binding site for Cu cation. An intrachain disulfide couples cysteine 468 to cysteine 478. The 2'-(S-cysteinyl)-histidine (Cys-His) cross-link spans 479–481 (CLH). The Cu cation site is built by histidine 481 and histidine 490. Asparagine 538 carries N-linked (GlcNAc...) asparagine glycosylation. Cystine bridges form between cysteine 589/cysteine 656 and cysteine 743/cysteine 748. Residues histidine 599, histidine 603, and histidine 630 each coordinate Cu cation. The segment at 840–1233 (TIIRKNVNSL…VFLAPAKTTH (394 aa)) is ODG. Cu cation is bound at residue histidine 880. A disulfide bond links cysteine 886 and cysteine 896. N-linked (GlcNAc...) asparagine glycosylation is present at asparagine 890. The segment at residues 897 to 899 (CQH) is a cross-link (2'-(S-cysteinyl)-histidine (Cys-His)). Residues histidine 899, histidine 908, histidine 1008, histidine 1012, and histidine 1039 each contribute to the Cu cation site. 2 disulfide bridges follow: cysteine 998/cysteine 1065 and cysteine 1152/cysteine 1158.

Belongs to the tyrosinase family. Hemocyanin subfamily. In terms of assembly, decamers of large identical subunits (350 kDa), each containing 7 globular oxygen-binding domains: ODA, ODB, ODC, ODD, ODE, ODF, and ODG. The cofactor is Cu(2+).

Functionally, hemocyanins are copper-containing oxygen carriers occurring freely dissolved in the hemolymph of many mollusks and arthropods. This is Hemocyanin A-type, units Ode to Odg from Enteroctopus dofleini (North Pacific giant octopus).